The chain runs to 157 residues: Small ribosomal subunit protein uS7 (157 aa).

It belongs to the universal ribosomal protein uS7 family. Part of the 30S ribosomal subunit. Contacts proteins S9 and S11.

Functionally, one of the primary rRNA binding proteins, it binds directly to 16S rRNA where it nucleates assembly of the head domain of the 30S subunit. Is located at the subunit interface close to the decoding center, probably blocks exit of the E-site tRNA. This chain is Small ribosomal subunit protein uS7, found in Blochmanniella floridana.